A 101-amino-acid chain; its full sequence is Chaperone modulatory protein CbpM (101 aa).

Belongs to the CbpM family.

Interacts with CbpA and inhibits both the DnaJ-like co-chaperone activity and the DNA binding activity of CbpA. Together with CbpA, modulates the activity of the DnaK chaperone system. Does not inhibit the co-chaperone activity of DnaJ. This chain is Chaperone modulatory protein CbpM, found in Escherichia coli O1:K1 / APEC.